We begin with the raw amino-acid sequence, 105 residues long: Phosphoribosyl-AMP cyclohydrolase (105 aa).

Residue Asp-72 coordinates Mg(2+). Cys-73 provides a ligand contact to Zn(2+). The Mg(2+) site is built by Asp-74 and Asp-76. Positions 89 and 96 each coordinate Zn(2+).

Belongs to the PRA-CH family. As to quaternary structure, homodimer. Requires Mg(2+) as cofactor. The cofactor is Zn(2+).

It is found in the cytoplasm. The catalysed reaction is 1-(5-phospho-beta-D-ribosyl)-5'-AMP + H2O = 1-(5-phospho-beta-D-ribosyl)-5-[(5-phospho-beta-D-ribosylamino)methylideneamino]imidazole-4-carboxamide. It functions in the pathway amino-acid biosynthesis; L-histidine biosynthesis; L-histidine from 5-phospho-alpha-D-ribose 1-diphosphate: step 3/9. Its function is as follows. Catalyzes the hydrolysis of the adenine ring of phosphoribosyl-AMP. The polypeptide is Phosphoribosyl-AMP cyclohydrolase (Listeria monocytogenes serotype 4a (strain HCC23)).